We begin with the raw amino-acid sequence, 1407 residues long: DNA-directed RNA polymerase subunit beta' (1407 aa).

Positions 70, 72, 85, and 88 each coordinate Zn(2+). Asp-460, Asp-462, and Asp-464 together coordinate Mg(2+). 4 residues coordinate Zn(2+): Cys-814, Cys-888, Cys-895, and Cys-898.

The protein belongs to the RNA polymerase beta' chain family. The RNAP catalytic core consists of 2 alpha, 1 beta, 1 beta' and 1 omega subunit. When a sigma factor is associated with the core the holoenzyme is formed, which can initiate transcription. The cofactor is Mg(2+). Zn(2+) serves as cofactor.

It catalyses the reaction RNA(n) + a ribonucleoside 5'-triphosphate = RNA(n+1) + diphosphate. In terms of biological role, DNA-dependent RNA polymerase catalyzes the transcription of DNA into RNA using the four ribonucleoside triphosphates as substrates. The polypeptide is DNA-directed RNA polymerase subunit beta' (Erwinia tasmaniensis (strain DSM 17950 / CFBP 7177 / CIP 109463 / NCPPB 4357 / Et1/99)).